We begin with the raw amino-acid sequence, 352 residues long: Cyclin-O (352 aa).

Residues 1–40 (MVTPCPASPGSPAAGAGRRDSHQNLRAPVKKSRRPCLRRK) form a disordered region. Residues 28–40 (PVKKSRRPCLRRK) show a composition bias toward basic residues. Ser83 is modified (phosphoserine).

This sequence belongs to the cyclin family. In terms of tissue distribution, present in respiratory cells (at protein level). Expressed in multiciliated tissue in brain and fallopian tube (at protein level). Highly expressed in oocytes.

The protein resides in the cytoplasm. The protein localises to the nucleus. Its subcellular location is the nucleolus. In terms of biological role, specifically required for generation of multiciliated cells, possibly by promoting a cell cycle state compatible with centriole amplification and maturation. Acts downstream of MCIDAS to promote mother centriole amplification and maturation in preparation for apical docking. May be involved in apoptosis in lymphoid cells; however, this result requires additional evidences in vivo. May be involved in oocyte meiotic resumption in oocytes. The chain is Cyclin-O from Mus musculus (Mouse).